Here is a 450-residue protein sequence, read N- to C-terminus: UPF0210 protein CPE1497 (450 aa).

The protein belongs to the UPF0210 family. In terms of assembly, homodimer.

In Clostridium perfringens (strain 13 / Type A), this protein is UPF0210 protein CPE1497.